Reading from the N-terminus, the 252-residue chain is Imidazole glycerol phosphate synthase subunit HisF (252 aa).

Catalysis depends on residues aspartate 11 and aspartate 130.

It belongs to the HisA/HisF family. As to quaternary structure, heterodimer of HisH and HisF.

The protein resides in the cytoplasm. The catalysed reaction is 5-[(5-phospho-1-deoxy-D-ribulos-1-ylimino)methylamino]-1-(5-phospho-beta-D-ribosyl)imidazole-4-carboxamide + L-glutamine = D-erythro-1-(imidazol-4-yl)glycerol 3-phosphate + 5-amino-1-(5-phospho-beta-D-ribosyl)imidazole-4-carboxamide + L-glutamate + H(+). It functions in the pathway amino-acid biosynthesis; L-histidine biosynthesis; L-histidine from 5-phospho-alpha-D-ribose 1-diphosphate: step 5/9. Functionally, IGPS catalyzes the conversion of PRFAR and glutamine to IGP, AICAR and glutamate. The HisF subunit catalyzes the cyclization activity that produces IGP and AICAR from PRFAR using the ammonia provided by the HisH subunit. The sequence is that of Imidazole glycerol phosphate synthase subunit HisF from Staphylococcus epidermidis (strain ATCC 35984 / DSM 28319 / BCRC 17069 / CCUG 31568 / BM 3577 / RP62A).